We begin with the raw amino-acid sequence, 200 residues long: TATA-box-binding protein 1 (200 aa).

Threonine 2 bears the N-acetylthreonine mark. 2 consecutive repeat copies span residues 25 to 101 (LQNI…ARIV) and 115 to 192 (IQNI…YPVL).

The protein belongs to the TBP family. In terms of assembly, belongs to the TFIID complex together with the TBP-associated factors (TAFs). Binds DNA as monomer. Interacts with TAF1 (via N-terminus). Interacts with MEE12/CCG1. Associates with PWP2 in the nucleus. Component of a nuclear protein complex containing at least TATA binding proteins (TBPs, e.g. TBP1 and TBP2) and ATX1.

The protein localises to the nucleus. In terms of biological role, general transcription factor that functions at the core of the DNA-binding multiprotein factor TFIID. Binding of TFIID to the TATA box is the initial transcriptional step of the pre-initiation complex (PIC), playing a role in the activation of eukaryotic genes transcribed by RNA polymerase II. The polypeptide is TATA-box-binding protein 1 (Arabidopsis thaliana (Mouse-ear cress)).